A 498-amino-acid chain; its full sequence is DNA-directed RNA polymerase subunit Rpo2N (498 aa).

Belongs to the RNA polymerase beta chain family. Part of the RNA polymerase complex.

It localises to the cytoplasm. It carries out the reaction RNA(n) + a ribonucleoside 5'-triphosphate = RNA(n+1) + diphosphate. Its function is as follows. DNA-dependent RNA polymerase (RNAP) catalyzes the transcription of DNA into RNA using the four ribonucleoside triphosphates as substrates. The Rpo2 subunit (Rpo2N and Rpo2C in this organism) is implicated in DNA promoter recognition and in nucleotide binding. The polypeptide is DNA-directed RNA polymerase subunit Rpo2N (Methanocaldococcus jannaschii (strain ATCC 43067 / DSM 2661 / JAL-1 / JCM 10045 / NBRC 100440) (Methanococcus jannaschii)).